A 624-amino-acid polypeptide reads, in one-letter code: Serine/threonine-protein kinase ppk35 (624 aa).

The Protein kinase domain occupies 162 to 465; sequence FDLLVKLGQG…TIEIQKHPFF (304 aa). ATP is bound by residues 168–176 and lysine 191; that span reads LGQGGYGSV. Catalysis depends on aspartate 285, which acts as the Proton acceptor. An AGC-kinase C-terminal domain is found at 466-548; that stretch reads KRLHWNGLRK…KYRPNARKPL (83 aa). Over residues 545–559 the composition is skewed to basic residues; sequence RKPLVGRHREKRQLR. A disordered region spans residues 545-617; the sequence is RKPLVGRHRE…VHRLLERKGK (73 aa). A compositionally biased stretch (basic and acidic residues) spans 560 to 574; it reads KEKPEKKNNSTKQKD. Positions 596–609 are enriched in basic residues; sequence SKTKGHKTKSSRVH.

The protein belongs to the protein kinase superfamily. Ser/Thr protein kinase family.

It localises to the cytoplasm. The protein resides in the nucleus. Its subcellular location is the nucleolus. It carries out the reaction L-seryl-[protein] + ATP = O-phospho-L-seryl-[protein] + ADP + H(+). The catalysed reaction is L-threonyl-[protein] + ATP = O-phospho-L-threonyl-[protein] + ADP + H(+). Functionally, has a role in meiosis. The chain is Serine/threonine-protein kinase ppk35 (ppk35) from Schizosaccharomyces pombe (strain 972 / ATCC 24843) (Fission yeast).